We begin with the raw amino-acid sequence, 245 residues long: 1-(5-phosphoribosyl)-5-[(5-phosphoribosylamino)methylideneamino] imidazole-4-carboxamide isomerase (245 aa).

The active-site Proton acceptor is the Asp-13. Asp-132 acts as the Proton donor in catalysis.

It belongs to the HisA/HisF family.

The protein localises to the cytoplasm. It catalyses the reaction 1-(5-phospho-beta-D-ribosyl)-5-[(5-phospho-beta-D-ribosylamino)methylideneamino]imidazole-4-carboxamide = 5-[(5-phospho-1-deoxy-D-ribulos-1-ylimino)methylamino]-1-(5-phospho-beta-D-ribosyl)imidazole-4-carboxamide. The protein operates within amino-acid biosynthesis; L-histidine biosynthesis; L-histidine from 5-phospho-alpha-D-ribose 1-diphosphate: step 4/9. This is 1-(5-phosphoribosyl)-5-[(5-phosphoribosylamino)methylideneamino] imidazole-4-carboxamide isomerase from Frankia alni (strain DSM 45986 / CECT 9034 / ACN14a).